The chain runs to 507 residues: ATP synthase subunit alpha, chloroplastic (507 aa).

Residue 170–177 (GDRQTGKT) coordinates ATP.

The protein belongs to the ATPase alpha/beta chains family. As to quaternary structure, F-type ATPases have 2 components, CF(1) - the catalytic core - and CF(0) - the membrane proton channel. CF(1) has five subunits: alpha(3), beta(3), gamma(1), delta(1), epsilon(1). CF(0) has four main subunits: a, b, b' and c.

Its subcellular location is the plastid. The protein localises to the chloroplast thylakoid membrane. The catalysed reaction is ATP + H2O + 4 H(+)(in) = ADP + phosphate + 5 H(+)(out). In terms of biological role, produces ATP from ADP in the presence of a proton gradient across the membrane. The alpha chain is a regulatory subunit. The polypeptide is ATP synthase subunit alpha, chloroplastic (Buxus microphylla (Littleleaf boxwood)).